Reading from the N-terminus, the 302-residue chain is 4-diphosphocytidyl-2-C-methyl-D-erythritol kinase (302 aa).

Lys20 is an active-site residue. 106 to 116 (PVASGVGGGSG) is an ATP binding site. Residue Asp148 is part of the active site.

Belongs to the GHMP kinase family. IspE subfamily.

It carries out the reaction 4-CDP-2-C-methyl-D-erythritol + ATP = 4-CDP-2-C-methyl-D-erythritol 2-phosphate + ADP + H(+). The protein operates within isoprenoid biosynthesis; isopentenyl diphosphate biosynthesis via DXP pathway; isopentenyl diphosphate from 1-deoxy-D-xylulose 5-phosphate: step 3/6. Catalyzes the phosphorylation of the position 2 hydroxy group of 4-diphosphocytidyl-2C-methyl-D-erythritol. This chain is 4-diphosphocytidyl-2-C-methyl-D-erythritol kinase, found in Bartonella henselae (strain ATCC 49882 / DSM 28221 / CCUG 30454 / Houston 1) (Rochalimaea henselae).